We begin with the raw amino-acid sequence, 229 residues long: Cytochrome c oxidase subunit 2 (229 aa).

Over 1–26 (MSTWANLGLQDSASPLMEQLIFFHDH) the chain is Mitochondrial intermembrane. Residues 27 to 48 (ALLILVMITVLVGYLMVMLFFN) form a helical membrane-spanning segment. At 49-62 (SYVNRFLLHGQLIE) the chain is on the mitochondrial matrix side. A helical transmembrane segment spans residues 63–82 (MIWTILPAIILLFIAMPSLR). Residues 83-229 (LLYLLDEINE…IKWISDKVNS (147 aa)) lie on the Mitochondrial intermembrane side of the membrane. 6 residues coordinate Cu cation: histidine 161, cysteine 196, glutamate 198, cysteine 200, histidine 204, and methionine 207. Residue glutamate 198 coordinates Mg(2+).

Belongs to the cytochrome c oxidase subunit 2 family. As to quaternary structure, component of the cytochrome c oxidase (complex IV, CIV), a multisubunit enzyme composed of a catalytic core of 3 subunits and several supernumerary subunits. The complex exists as a monomer or a dimer and forms supercomplexes (SCs) in the inner mitochondrial membrane with ubiquinol-cytochrome c oxidoreductase (cytochrome b-c1 complex, complex III, CIII). Cu cation is required as a cofactor.

Its subcellular location is the mitochondrion inner membrane. The enzyme catalyses 4 Fe(II)-[cytochrome c] + O2 + 8 H(+)(in) = 4 Fe(III)-[cytochrome c] + 2 H2O + 4 H(+)(out). In terms of biological role, component of the cytochrome c oxidase, the last enzyme in the mitochondrial electron transport chain which drives oxidative phosphorylation. The respiratory chain contains 3 multisubunit complexes succinate dehydrogenase (complex II, CII), ubiquinol-cytochrome c oxidoreductase (cytochrome b-c1 complex, complex III, CIII) and cytochrome c oxidase (complex IV, CIV), that cooperate to transfer electrons derived from NADH and succinate to molecular oxygen, creating an electrochemical gradient over the inner membrane that drives transmembrane transport and the ATP synthase. Cytochrome c oxidase is the component of the respiratory chain that catalyzes the reduction of oxygen to water. Electrons originating from reduced cytochrome c in the intermembrane space (IMS) are transferred via the dinuclear copper A center (CU(A)) of subunit 2 and heme A of subunit 1 to the active site in subunit 1, a binuclear center (BNC) formed by heme A3 and copper B (CU(B)). The BNC reduces molecular oxygen to 2 water molecules using 4 electrons from cytochrome c in the IMS and 4 protons from the mitochondrial matrix. The polypeptide is Cytochrome c oxidase subunit 2 (mt:CoII) (Drosophila subobscura (Fruit fly)).